A 158-amino-acid polypeptide reads, in one-letter code: NAD(P)H-quinone oxidoreductase subunit J, chloroplastic (158 aa).

It belongs to the complex I 30 kDa subunit family. In terms of assembly, NDH is composed of at least 16 different subunits, 5 of which are encoded in the nucleus.

It is found in the plastid. It localises to the chloroplast thylakoid membrane. The enzyme catalyses a plastoquinone + NADH + (n+1) H(+)(in) = a plastoquinol + NAD(+) + n H(+)(out). It catalyses the reaction a plastoquinone + NADPH + (n+1) H(+)(in) = a plastoquinol + NADP(+) + n H(+)(out). NDH shuttles electrons from NAD(P)H:plastoquinone, via FMN and iron-sulfur (Fe-S) centers, to quinones in the photosynthetic chain and possibly in a chloroplast respiratory chain. The immediate electron acceptor for the enzyme in this species is believed to be plastoquinone. Couples the redox reaction to proton translocation, and thus conserves the redox energy in a proton gradient. This is NAD(P)H-quinone oxidoreductase subunit J, chloroplastic from Nuphar advena (Common spatterdock).